Consider the following 391-residue polypeptide: Chorismate synthase (391 aa).

NADP(+) is bound by residues Arg-39 and Arg-45. Residues 133 to 135 (RAS), 254 to 255 (QA), Gly-299, 314 to 318 (KPIAT), and Arg-340 each bind FMN.

Belongs to the chorismate synthase family. As to quaternary structure, homotetramer. Requires FMNH2 as cofactor.

The enzyme catalyses 5-O-(1-carboxyvinyl)-3-phosphoshikimate = chorismate + phosphate. It functions in the pathway metabolic intermediate biosynthesis; chorismate biosynthesis; chorismate from D-erythrose 4-phosphate and phosphoenolpyruvate: step 7/7. Functionally, catalyzes the anti-1,4-elimination of the C-3 phosphate and the C-6 proR hydrogen from 5-enolpyruvylshikimate-3-phosphate (EPSP) to yield chorismate, which is the branch point compound that serves as the starting substrate for the three terminal pathways of aromatic amino acid biosynthesis. This reaction introduces a second double bond into the aromatic ring system. The polypeptide is Chorismate synthase (Symbiobacterium thermophilum (strain DSM 24528 / JCM 14929 / IAM 14863 / T)).